A 410-amino-acid polypeptide reads, in one-letter code: Neuroserpin (410 aa).

The signal sequence occupies residues 1 to 16 (MYFLGLLSLLVLPSKA). N-linked (GlcNAc...) asparagine glycosylation is found at N157 and N401.

The protein belongs to the serpin family. As to expression, detected in embryonic ocular vitreous fluid (at protein level). In the embryo present in retina, brain, cerebellum and spinal cord. In adult, predominantly expressed in the brain.

It localises to the secreted. The protein resides in the cytoplasmic vesicle. Its subcellular location is the secretory vesicle lumen. It is found in the perikaryon. In terms of biological role, serine protease inhibitor that inhibits plasminogen activators and plasmin but not thrombin. May be involved in the formation or reorganization of synaptic connections as well as for synaptic plasticity in the adult nervous system. May protect neurons from cell damage by tissue-type plasminogen activator. This is Neuroserpin (SERPINI1) from Gallus gallus (Chicken).